Here is a 266-residue protein sequence, read N- to C-terminus: Outer kinetochore KNL1 complex subunit ZWINT (266 aa).

A disordered region spans residues 95–115; sequence DQNPDALASEDTSRQKATETK. Positions 105–115 are enriched in basic and acidic residues; sequence DTSRQKATETK. Residues 136-237 are a coiled coil; it reads LSEALPQVKE…QRNQSYLQLL (102 aa). Phosphoserine occurs at positions 232 and 265.

Component of the KNL1 complex composed of KNL1 and ZWINT. Part of the ten-subunit outer kinetochore KMN network that includes the KNL1, MIS12 and NDC80 complexes; a bioriented kinetochore contains approximately 150 copies of the network. Interacts with the MIS12 complex subunits MIS12 DSN1, and PMF1. Interacts with the NDC80 complex subunit NDC80 during mitosis. Interacts with ZW10. Interacts with CETN3. As to expression, expressed abundantly in brain and at lower levels in testis and kidney.

The protein localises to the nucleus. It localises to the chromosome. It is found in the centromere. Its subcellular location is the kinetochore. Its function is as follows. Acts as a component of the outer kinetochore KNL1 complex that serves as a docking point for spindle assembly checkpoint components and mediates microtubule-kinetochore interactions. Kinetochores, consisting of a centromere-associated inner segment and a microtubule-contacting outer segment, play a crucial role in chromosome segregation by mediating the physical connection between centromeric DNA and spindle microtubules. The outer kinetochore is made up of the ten-subunit KMN network, comprising the MIS12, NDC80 and KNL1 complexes, and auxiliary microtubule-associated components; together they connect the outer kinetochore with the inner kinetochore, bind microtubules, and mediate interactions with mitotic checkpoint proteins that delay anaphase until chromosomes are bioriented on the spindle. Targets the RZZ complex to the kinetochore at prometaphase. Recruits MAD2L1 to the kinetochore, but is not required for BUB1B localization. In addition to orienting mitotic chromosomes, it is also essential for alignment of homologous chromosomes during meiotic metaphase I. In meiosis I, required to activate the spindle assembly checkpoint at unattached kinetochores to correct erroneous kinetochore-microtubule attachments. This Rattus norvegicus (Rat) protein is Outer kinetochore KNL1 complex subunit ZWINT (Zwint).